The sequence spans 426 residues: MPLSYLDKNPVIDSKKHALRKKLFLSCAYFGLSLACLSSNAWASVEPLSVNGNKIYAGEKAKSFAGNSLFWSNNGWGGEKFYTADTVASLKKDWKSSIVRAAMGVQESGGYLQDPAGNKAKVERVVDAAIANDMYAIIGWHSHSAENNRSEAIRFFQEMARKYGNKPNVIYEIYNEPLQVSWSNTIKPYAEAVISAIRAIDPDNLIIVGTPSWSQNVDEASRDPINAKNIAYTLHFYAGTHGESLRNKARQALNNGIALFVTEWGTVNADGNGGVNQTETDAWVTFMRDNNISNANWALNDKNEGASTYYPDSKNLTESGKKVKSIIQSWPYKAGSAASATTDPSTDTTTDTTVDEPTTTDTPATADCANANVYPNWVSKDWAGGQPTHNEAGQSIVYKGNLYTANWYTASVPGSDSSWTQVGSCN.

A signal peptide spans Met-1–Ala-43. Residues Ser-44–Tyr-332 are catalytic. Glu-176 acts as the Proton donor in catalysis. Residue Glu-263 is the Nucleophile of the active site. Positions Lys-333–Ala-366 are linker. The segment at Ser-336–Asp-367 is disordered. Residues Asp-367 to Asn-426 form a cellulose-binding region. Cysteines 368 and 425 form a disulfide.

It belongs to the glycosyl hydrolase 5 (cellulase A) family.

It localises to the secreted. It carries out the reaction Endohydrolysis of (1-&gt;4)-beta-D-glucosidic linkages in cellulose, lichenin and cereal beta-D-glucans.. Functionally, represents 97% of the global cellulase activity. This is Endoglucanase Z (celZ) from Dickeya dadantii (strain 3937) (Erwinia chrysanthemi (strain 3937)).